We begin with the raw amino-acid sequence, 449 residues long: MSVKWEKTGKTSGELTFEISQEEVKKGLDQAFKRVKKNLRVPGFRKGHVSRVVFDQFYGEEALYEDALNIVLPEAYAAAVKEAGIDPVGQPQITPVSMDKNKPWEMKATVSVKPEVKLGDYKGIEVPKQSTRVLVKDVDAELNKRREQNAELVLKDGKAAKGDTVTIDYTGTIDGKPFDGGSAQNYSLELGSGTFIPGFEDQLIGHKAGDDVDVVVTFPEDYGAKDLAGKEAHFATKIHEVKSKELPKLDDEFAKDVDDSVESLDELKDKIKKDLKKHKEEDAKDAIQDAAIKGAVENATIDEVPQAMIDEDVQNQLNQYLGNMQRQGIDPQTYFKLTGTTEAQLREQLAKGAAERVKTNLVLEAIVAKEKLDASADEIKQEIKDLAHDYNMDEKVVRRSLSDDMLKHDIAIRKAIDLVADKAKQVAKKATKKSTAKKSTKEDEKKADK.

The PPIase FKBP-type domain occupies 162–247; sequence GDTVTIDYTG…IHEVKSKELP (86 aa). Residues 427-438 show a composition bias toward basic residues; the sequence is AKKATKKSTAKK. The disordered stretch occupies residues 427 to 449; it reads AKKATKKSTAKKSTKEDEKKADK. The span at 439–449 shows a compositional bias: basic and acidic residues; the sequence is STKEDEKKADK.

This sequence belongs to the FKBP-type PPIase family. Tig subfamily.

It is found in the cytoplasm. It catalyses the reaction [protein]-peptidylproline (omega=180) = [protein]-peptidylproline (omega=0). In terms of biological role, involved in protein export. Acts as a chaperone by maintaining the newly synthesized protein in an open conformation. Functions as a peptidyl-prolyl cis-trans isomerase. This chain is Trigger factor, found in Lactobacillus gasseri (strain ATCC 33323 / DSM 20243 / BCRC 14619 / CIP 102991 / JCM 1131 / KCTC 3163 / NCIMB 11718 / NCTC 13722 / AM63).